The primary structure comprises 231 residues: Dephospho-CoA kinase domain-containing protein (231 aa).

The DPCK domain occupies 3-207 (LVGLTGGIAS…HSLEYLPLRL (205 aa)). 8-15 (GGIASGKS) provides a ligand contact to ATP.

This sequence belongs to the CoaE family.

The polypeptide is Dephospho-CoA kinase domain-containing protein (DCAKD) (Bos taurus (Bovine)).